Reading from the N-terminus, the 363-residue chain is 3-dehydroquinate synthase (363 aa).

Residues 134 to 135, Lys147, and Lys156 contribute to the NAD(+) site; that span reads TT. Residues Glu189, His254, and His271 each contribute to the Zn(2+) site.

This sequence belongs to the sugar phosphate cyclases superfamily. Dehydroquinate synthase family. Co(2+) serves as cofactor. Zn(2+) is required as a cofactor. It depends on NAD(+) as a cofactor.

The protein localises to the cytoplasm. The enzyme catalyses 7-phospho-2-dehydro-3-deoxy-D-arabino-heptonate = 3-dehydroquinate + phosphate. Its pathway is metabolic intermediate biosynthesis; chorismate biosynthesis; chorismate from D-erythrose 4-phosphate and phosphoenolpyruvate: step 2/7. Its function is as follows. Catalyzes the conversion of 3-deoxy-D-arabino-heptulosonate 7-phosphate (DAHP) to dehydroquinate (DHQ). In Prochlorococcus marinus (strain AS9601), this protein is 3-dehydroquinate synthase.